The primary structure comprises 471 residues: Glutamate--tRNA ligase (471 aa).

A 'HIGH' region motif is present at residues 9–19 (PSPTGYLHVGG). Zn(2+) contacts are provided by Cys98, Cys100, Cys125, and His127. The 'KMSKS' region signature appears at 237-241 (KLSKR). Lys240 serves as a coordination point for ATP.

This sequence belongs to the class-I aminoacyl-tRNA synthetase family. Glutamate--tRNA ligase type 1 subfamily. As to quaternary structure, monomer. Zn(2+) serves as cofactor.

Its subcellular location is the cytoplasm. It carries out the reaction tRNA(Glu) + L-glutamate + ATP = L-glutamyl-tRNA(Glu) + AMP + diphosphate. Catalyzes the attachment of glutamate to tRNA(Glu) in a two-step reaction: glutamate is first activated by ATP to form Glu-AMP and then transferred to the acceptor end of tRNA(Glu). This chain is Glutamate--tRNA ligase, found in Salmonella dublin (strain CT_02021853).